A 183-amino-acid chain; its full sequence is Holliday junction branch migration complex subunit RuvA (183 aa).

The domain I stretch occupies residues 1–63 (MTVGLIGVVE…EDAHLLYGFL (63 aa)). The domain II stretch occupies residues 64–141 (EESEKILFER…IQDETKPVHN (78 aa)). N141 is a region of interest (flexible linker). The domain III stretch occupies residues 141-183 (NEAFLALESLGFKSAEINPILKKLKPNLSVEEAIKEALQQLRS).

It belongs to the RuvA family. In terms of assembly, homotetramer. Forms an RuvA(8)-RuvB(12)-Holliday junction (HJ) complex. HJ DNA is sandwiched between 2 RuvA tetramers; dsDNA enters through RuvA and exits via RuvB. An RuvB hexamer assembles on each DNA strand where it exits the tetramer. Each RuvB hexamer is contacted by two RuvA subunits (via domain III) on 2 adjacent RuvB subunits; this complex drives branch migration. In the full resolvosome a probable DNA-RuvA(4)-RuvB(12)-RuvC(2) complex forms which resolves the HJ.

It is found in the cytoplasm. The RuvA-RuvB-RuvC complex processes Holliday junction (HJ) DNA during genetic recombination and DNA repair, while the RuvA-RuvB complex plays an important role in the rescue of blocked DNA replication forks via replication fork reversal (RFR). RuvA specifically binds to HJ cruciform DNA, conferring on it an open structure. The RuvB hexamer acts as an ATP-dependent pump, pulling dsDNA into and through the RuvAB complex. HJ branch migration allows RuvC to scan DNA until it finds its consensus sequence, where it cleaves and resolves the cruciform DNA. This Helicobacter acinonychis (strain Sheeba) protein is Holliday junction branch migration complex subunit RuvA.